The chain runs to 450 residues: Glucose-6-phosphate isomerase (450 aa).

The active-site Proton donor is Glu290. Residues His311 and Lys425 contribute to the active site.

It belongs to the GPI family.

Its subcellular location is the cytoplasm. The enzyme catalyses alpha-D-glucose 6-phosphate = beta-D-fructose 6-phosphate. The protein operates within carbohydrate biosynthesis; gluconeogenesis. It participates in carbohydrate degradation; glycolysis; D-glyceraldehyde 3-phosphate and glycerone phosphate from D-glucose: step 2/4. Catalyzes the reversible isomerization of glucose-6-phosphate to fructose-6-phosphate. The chain is Glucose-6-phosphate isomerase from Leuconostoc mesenteroides subsp. mesenteroides (strain ATCC 8293 / DSM 20343 / BCRC 11652 / CCM 1803 / JCM 6124 / NCDO 523 / NBRC 100496 / NCIMB 8023 / NCTC 12954 / NRRL B-1118 / 37Y).